Reading from the N-terminus, the 63-residue chain is Large ribosomal subunit protein bL32 (63 aa).

This sequence belongs to the bacterial ribosomal protein bL32 family.

The polypeptide is Large ribosomal subunit protein bL32 (Acholeplasma laidlawii).